The primary structure comprises 195 residues: Dynactin subunit 6 (195 aa).

Belongs to the dynactin subunits 5/6 family. Dynactin subunit 6 subfamily. In terms of assembly, member of the pointed-end complex of the dynactin shoulder complex which contains dctn4, dctn5 and dctn6 subunits and Actr10. Within the complex dctn6 forms a heterodimer with dctn5. Interacts with plk1.

It is found in the cytoplasm. The protein resides in the cytoskeleton. The protein localises to the chromosome. Its subcellular location is the centromere. It localises to the kinetochore. In terms of biological role, part of the dynactin complex that activates the molecular motor dynein for ultra-processive transport along microtubules. This Danio rerio (Zebrafish) protein is Dynactin subunit 6 (dctn6).